The following is a 62-amino-acid chain: Defensin BmKDfsin5 (62 aa).

An N-terminal signal peptide occupies residues 1 to 24 (MKVIALFFLFAFIFCTLEVAIVEA). 3 disulfides stabilise this stretch: Cys-28–Cys-49, Cys-35–Cys-57, and Cys-39–Cys-59.

This sequence belongs to the invertebrate defensin family. Type 2 subfamily. In terms of tissue distribution, highly expressed in non-venom gland (hemolymph) and moderately expressed in venom gland.

It localises to the secreted. Antibacterial peptide active against Gram-positive bacteria (including S.aureus ATCC25923 (MIC=2.5 uM), M.luteus AB93113 (MIC=2.5 uM), and the antibiotic-resistant S.epidermidis PRSE P1389 (MIC=1.25 uM)), but not against Gram-negative bacteria (including E.coli and P.aeruginosa). Also has weak blocking activity on Kv1.1/KCNA1 (8.7% inhibition), Kv1.2/KCNA2 (10.2% inhibition), Kv1.3/KCNA3 (9.0% inhibition), KCa3.1/KCNN4/IK (9.1% inhibition), KCa2.3/KCNN3/SK3 (46.3% inhibition) and Kv11.1/KCNH2/ERG1 (16.9% inhibition) channels (tested at 1 uM). It inhibits potassium channel current by interacting with the pore region. This chain is Defensin BmKDfsin5, found in Olivierus martensii (Manchurian scorpion).